Here is a 120-residue protein sequence, read N- to C-terminus: Large ribosomal subunit protein bL19 (120 aa).

It belongs to the bacterial ribosomal protein bL19 family.

This protein is located at the 30S-50S ribosomal subunit interface and may play a role in the structure and function of the aminoacyl-tRNA binding site. This is Large ribosomal subunit protein bL19 from Acaryochloris marina (strain MBIC 11017).